The following is a 76-amino-acid chain: Acyl carrier protein (76 aa).

A Carrier domain is found at 2–76 (SNIEERVIKV…QSAIDFVKSR (75 aa)). The residue at position 37 (Ser37) is an O-(pantetheine 4'-phosphoryl)serine.

It belongs to the acyl carrier protein (ACP) family. In terms of processing, 4'-phosphopantetheine is transferred from CoA to a specific serine of apo-ACP by AcpS. This modification is essential for activity because fatty acids are bound in thioester linkage to the sulfhydryl of the prosthetic group.

Its subcellular location is the cytoplasm. Its pathway is lipid metabolism; fatty acid biosynthesis. Its function is as follows. Carrier of the growing fatty acid chain in fatty acid biosynthesis. This chain is Acyl carrier protein, found in Dichelobacter nodosus (strain VCS1703A).